The following is a 654-amino-acid chain: Pentatricopeptide repeat-containing protein At5g61400 (654 aa).

16 PPR repeats span residues 37-71, 74-104, 131-161, 163-197, 198-232, 233-267, 268-302, 303-337, 338-372, 373-407, 408-442, 443-477, 478-512, 513-543, 548-582, and 583-617; these read SSFS…RVSK, DLQS…LIER, SIGV…MKCS, DSKA…GLVP, DVHI…GIKP, NVYI…GVLP, NLYT…ELLP, NVVV…GVDP, NLYV…NLSP, DVFT…RIFP, SSAT…GVEP, NIIT…GIVP, DVVT…GIHP, NDHT…NNQQ, NHVG…GITP, and DICS…GILP.

Belongs to the PPR family. P subfamily.

The protein is Pentatricopeptide repeat-containing protein At5g61400 of Arabidopsis thaliana (Mouse-ear cress).